A 326-amino-acid polypeptide reads, in one-letter code: Glutamine synthetase (326 aa).

One can recognise a GS beta-grasp domain in the interval 4–85 (FKLEYIWLDG…VMCEVMMPDG (82 aa)). Positions 83–326 (PDGHAHASNA…GDPYQIVRRF (244 aa)) constitute a GS catalytic domain. Residues glutamate 107 and glutamate 109 each contribute to the Mg(2+) site. ATP is bound at residue glutamate 164. 2 residues coordinate Mg(2+): glutamate 169 and glutamate 176. Glutamate 275 lines the L-glutamate pocket.

It belongs to the glutamine synthetase family. As to quaternary structure, homooctamer and homotetramer. Mg(2+) is required as a cofactor.

The protein resides in the cytoplasm. It catalyses the reaction L-glutamate + NH4(+) + ATP = L-glutamine + ADP + phosphate + H(+). Transferase activity is inhibited by NH(4)Cl. Functionally, catalyzes the ATP-dependent biosynthesis of glutamine from glutamate and ammonia. The sequence is that of Glutamine synthetase from Rhizobium leguminosarum bv. phaseoli.